Reading from the N-terminus, the 385-residue chain is Flavin-dependent monooxygenase (385 aa).

Residues 12 to 15 (ASIA), 34 to 36 (EKN), 44 to 47 (YAID), arginine 105, tyrosine 267, aspartate 289, and 296 to 302 (PLSGQGT) contribute to the FAD site.

It belongs to the aromatic-ring hydroxylase family. The cofactor is FAD.

It catalyses the reaction 7-chlorotetracycline + NADPH + O2 + H(+) = (1S,10S,10aS)-3-(CONH2)-9-Cl-1-(Me2N)-3,3a,4,10-(HO)4-10-Me-2,5-dioxo-1H,10aH,11H,11aH-cyclopenta[b]anthracen-6-olate + CO + NADP(+) + H2O. It carries out the reaction a tetracycline + NADPH + O2 + H(+) = a (1S,10aS)-3-(CONH2)-1-(Me2N)-3,3a,4,6-(HO)4-2,5-dioxo-1H,10aH,11H,11aH-cyclopenta[b]anthracene + CO + NADP(+) + H2O. With respect to regulation, inhibited by anhydrotetracycline. An FAD-requiring monooxygenase active on tetracycline antibiotic and some of its derivatives, which leads to their inactivation. Expression in E.coli confers high resistance to oxytetracycline, slightly less resistance to tetracycline, moderate resistance to minocycline but no resistance to tigecycline. Degrades tetracycline and oxytetracycline; the reaction requires NADPH. Degrades and confers resistance to chlortetracycline. The polypeptide is Flavin-dependent monooxygenase (Unknown prokaryotic organism).